The following is a 337-amino-acid chain: Glyceraldehyde-3-phosphate dehydrogenase 2 (337 aa).

NADP(+)-binding positions include 11-12, Asp-35, Arg-80, and Thr-122; that span reads RI. D-glyceraldehyde 3-phosphate contacts are provided by residues 153-155, Thr-184, Arg-199, 212-213, and Arg-235; these read SCT and TG. The Nucleophile role is filled by Cys-154. NADP(+) is bound at residue Asn-317.

Homotetramer.

It is found in the cytoplasm. It carries out the reaction D-glyceraldehyde 3-phosphate + phosphate + NADP(+) = (2R)-3-phospho-glyceroyl phosphate + NADPH + H(+). It catalyses the reaction D-glyceraldehyde 3-phosphate + phosphate + NAD(+) = (2R)-3-phospho-glyceroyl phosphate + NADH + H(+). The protein operates within carbohydrate biosynthesis; Calvin cycle. Gap2 has a major role in carbon fixation as a component of the Calvin cycle. Catalyzes the oxidative phosphorylation of glyceraldehyde 3-phosphate (G3P) to 1,3-bisphosphoglycerate (BPG) using the cofactor NADP. The first reaction step involves the formation of a hemiacetal intermediate between G3P and a cysteine residue, and this hemiacetal intermediate is then oxidized to a thioester, with concomitant reduction of NADP to NADPH. The reduced NADPH is then exchanged with the second NAD, and the thioester is attacked by a nucleophilic inorganic phosphate to produce BPG. The chain is Glyceraldehyde-3-phosphate dehydrogenase 2 (gap2) from Nostoc sp. (strain PCC 7120 / SAG 25.82 / UTEX 2576).